We begin with the raw amino-acid sequence, 216 residues long: Ras-related protein Rab11C (216 aa).

19-26 (GDSGVGKS) is a binding site for GTP. An Effector region motif is present at residues 41–49 (SKSTIGVEF). GTP is bound by residues 67–71 (DTAGQ) and 125–128 (NKSD). S-geranylgeranyl cysteine attachment occurs at residues C213 and C214.

The protein belongs to the small GTPase superfamily. Rab family.

The protein localises to the cell membrane. The protein is Ras-related protein Rab11C (RAB11C) of Lotus japonicus (Lotus corniculatus var. japonicus).